The following is an 818-amino-acid chain: Catenin beta (818 aa).

Polar residues-rich tracts occupy residues 1-21 and 48-66; these read METY…TPQG and GDSG…SVSS. 2 disordered regions span residues 1–24 and 48–71; these read METY…GQYM and GDSG…HGLD. 7 ARM repeats span residues 164-203, 248-287, 412-451, 454-495, 501-541, 543-582, and 648-687; these read NYQD…QLSK, RQGL…NLLL, DAAT…NLTC, QRNK…HLTS, EMAQ…NLAL, PANH…NTSA, and KEGA…RMSE. Residues 732 to 818 are disordered; sequence QGFRGYQGSG…QMAAWFDTDL (87 aa).

The protein belongs to the beta-catenin family.

It localises to the cytoplasm. The protein localises to the cytoskeleton. In terms of biological role, binds to the cytoplasmic domain of the cell-cell adhesion molecule E-cadherin, and perhaps to other (membrane) proteins. The association of catenins to cadherins produces a complex which is linked to the actin filament network, and which seems to be of primary importance for cadherins cell-adhesion properties. In Urechis caupo (Innkeeper worm), this protein is Catenin beta.